The chain runs to 392 residues: Major outer membrane protein P.IA (392 aa).

The first 19 residues, 1 to 19 (MRKKLTALVLSALPLAAVA), serve as a signal peptide directing secretion.

This sequence belongs to the Gram-negative porin family. In terms of assembly, homotrimer.

The protein localises to the cell outer membrane. Serves as a slightly cation selective porin. Major antigen on the gonococcal cell surface and it may have pathogenic properties in addition to its porin activity. The sequence is that of Major outer membrane protein P.IA (porA) from Neisseria meningitidis serogroup B (strain ATCC BAA-335 / MC58).